Reading from the N-terminus, the 420-residue chain is Pre-mRNA-splicing factor RBM22 (420 aa).

N-acetylalanine is present on alanine 2. A phosphoserine mark is found at serine 4 and serine 102. Glycyl lysine isopeptide (Lys-Gly) (interchain with G-Cter in SUMO2) cross-links involve residues lysine 139 and lysine 149. A C3H1-type zinc finger spans residues 159 to 186 (RNRPHICSFWVKGECKRGEECPYRHEKP). At lysine 212 the chain carries N6-acetyllysine. In terms of domain architecture, RRM spans 232–305 (TTLYVGGLGD…RRLNVKWGRS (74 aa)). Lysine 290 is covalently cross-linked (Glycyl lysine isopeptide (Lys-Gly) (interchain with G-Cter in SUMO2)). Disordered regions lie at residues 303–343 (GRSQ…AAEE) and 372–420 (APPP…HSSP). Basic and acidic residues predominate over residues 309–318 (RGKEKEKDGT).

It belongs to the SLT11 family. In terms of assembly, component of the pre-catalytic and catalytic spliceosome complexes. Component of the postcatalytic spliceosome P complex. Interacts with PDCD6; the interaction induces translocation of PDCD6 in the cytoplasm. Interacts with PPIL1.

It localises to the nucleus. It is found in the cytoplasm. Functionally, required for pre-mRNA splicing as component of the activated spliceosome. Involved in the first step of pre-mRNA splicing. Binds directly to the internal stem-loop (ISL) domain of the U6 snRNA and to the pre-mRNA intron near the 5' splice site during the activation and catalytic phases of the spliceosome cycle. Involved in both translocations of the nuclear SLU7 to the cytoplasm and the cytosolic calcium-binding protein PDCD6 to the nucleus upon cellular stress responses. This is Pre-mRNA-splicing factor RBM22 (RBM22) from Bos taurus (Bovine).